A 160-amino-acid chain; its full sequence is Transcription elongation factor GreA (160 aa).

The stretch at Met-1–Arg-72 forms a coiled coil.

It belongs to the GreA/GreB family.

Its function is as follows. Necessary for efficient RNA polymerase transcription elongation past template-encoded arresting sites. The arresting sites in DNA have the property of trapping a certain fraction of elongating RNA polymerases that pass through, resulting in locked ternary complexes. Cleavage of the nascent transcript by cleavage factors such as GreA or GreB allows the resumption of elongation from the new 3'terminus. GreA releases sequences of 2 to 3 nucleotides. This is Transcription elongation factor GreA from Streptococcus thermophilus (strain ATCC BAA-491 / LMD-9).